Here is a 484-residue protein sequence, read N- to C-terminus: Hemogen (484 aa).

A compositionally biased stretch (basic and acidic residues) spans 1–25 (MDLGKDQSHLKHHQTPDPHQEENHS). Disordered stretches follow at residues 1 to 32 (MDLG…IGTW) and 44 to 91 (KAEV…PQPQ). The necessary for nuclear localization stretch occupies residues 7-87 (QSHLKHHQTP…RQQNTELKVE (81 aa)). The segment covering 61–79 (KKRKQQRTGKGNRRGRKRQ) has biased composition (basic residues). Residues Ser-123, Ser-159, Ser-181, Ser-188, and Ser-201 each carry the phosphoserine modification. Residue Thr-246 is modified to Phosphothreonine. Disordered regions lie at residues 265–290 (DVPK…TDQG), 306–369 (EPKD…YSPE), and 386–471 (QETS…ILNE). Residues 306 to 320 (EPKDLSTKTHQESAE) show a composition bias toward basic and acidic residues. A phosphoserine mark is found at Ser-349 and Ser-353. Thr-360 is modified (phosphothreonine). 2 positions are modified to phosphoserine: Ser-363 and Ser-367. Basic and acidic residues-rich tracts occupy residues 413–428 (YKNK…EPHQ), 438–447 (PKAHQEDAKD), and 454–463 (EMKEKPKEEP).

In terms of tissue distribution, expressed in hematopoietic precursor cells, thyroid and spermatids (at protein level). Expressed in bone marrow, testis, thymus. Expressed in prostate cancer and ovarian cancer. Also expressed in thymus and thyroid tumors, non-Hodgkin lymphoma, various leukemia cell lines, peripheral blood mononuclear cells (PBMCs) and bone marrow mononuclear cells (BMMCs) of patients with leukemia.

The protein resides in the nucleus. Functionally, regulates the proliferation and differentiation of hematopoietic cells. Overexpression block the TPA-induced megakaryocytic differentiation in the K562 cell model. May also prevent cell apoptosis through the activation of the nuclear factor-kappa B (NF-kB). The sequence is that of Hemogen (HEMGN) from Homo sapiens (Human).